We begin with the raw amino-acid sequence, 216 residues long: Triosephosphate isomerase (216 aa).

7–9 (NLK) contacts substrate. Catalysis depends on H89, which acts as the Electrophile. E137 serves as the catalytic Proton acceptor. Residues I142, G175, and 196-197 (AS) each bind substrate.

The protein belongs to the triosephosphate isomerase family. As to quaternary structure, homotetramer; dimer of dimers.

It is found in the cytoplasm. It carries out the reaction D-glyceraldehyde 3-phosphate = dihydroxyacetone phosphate. The protein operates within carbohydrate biosynthesis; gluconeogenesis. It functions in the pathway carbohydrate degradation; glycolysis; D-glyceraldehyde 3-phosphate from glycerone phosphate: step 1/1. In terms of biological role, involved in the gluconeogenesis. Catalyzes stereospecifically the conversion of dihydroxyacetone phosphate (DHAP) to D-glyceraldehyde-3-phosphate (G3P). The protein is Triosephosphate isomerase of Thermoplasma acidophilum (strain ATCC 25905 / DSM 1728 / JCM 9062 / NBRC 15155 / AMRC-C165).